The sequence spans 234 residues: MRLVQLSRHSIAFPSPEGALREPNGLLALGGDLSPARLLMAYQHGIFPWFSPGDPILWWSPDPRAVLWPEKFHLSRSMKRFHNASPYRVTLNYAFDRVIDGCANHRDEGTWITRGIEEAYRRLHELGHAHSIEVWRDRELVGGMYGVSQGALFCGESMFSRQENASKTALLVFCAEFIRHGGKLIDCQVLNSHTASLGAIEIPRRDYLDHLAALRQQPLASRFWVPRTLFLPRK.

The protein belongs to the L/F-transferase family.

It is found in the cytoplasm. It catalyses the reaction N-terminal L-lysyl-[protein] + L-leucyl-tRNA(Leu) = N-terminal L-leucyl-L-lysyl-[protein] + tRNA(Leu) + H(+). The enzyme catalyses N-terminal L-arginyl-[protein] + L-leucyl-tRNA(Leu) = N-terminal L-leucyl-L-arginyl-[protein] + tRNA(Leu) + H(+). The catalysed reaction is L-phenylalanyl-tRNA(Phe) + an N-terminal L-alpha-aminoacyl-[protein] = an N-terminal L-phenylalanyl-L-alpha-aminoacyl-[protein] + tRNA(Phe). In terms of biological role, functions in the N-end rule pathway of protein degradation where it conjugates Leu, Phe and, less efficiently, Met from aminoacyl-tRNAs to the N-termini of proteins containing an N-terminal arginine or lysine. The protein is Leucyl/phenylalanyl-tRNA--protein transferase of Salmonella gallinarum (strain 287/91 / NCTC 13346).